The chain runs to 132 residues: Small ribosomal subunit protein uS8 (132 aa).

Belongs to the universal ribosomal protein uS8 family. In terms of assembly, part of the 30S ribosomal subunit. Contacts proteins S5 and S12.

Functionally, one of the primary rRNA binding proteins, it binds directly to 16S rRNA central domain where it helps coordinate assembly of the platform of the 30S subunit. The polypeptide is Small ribosomal subunit protein uS8 (Anaeromyxobacter dehalogenans (strain 2CP-1 / ATCC BAA-258)).